A 628-amino-acid chain; its full sequence is Alpha pinene synthase, chloroplastic (628 aa).

Residues 1 to 46 (MSLGCITPLASAMVGPKLVRPLIHHNPLFHHKPLNRPYLQTKIPLR) constitute a chloroplast transit peptide. The Mg(2+) site is built by Asp-381, Asp-385, and Glu-532. The DDXXD motif signature appears at 381–385 (DDMYD).

Belongs to the terpene synthase family. Tpsa subfamily. Mg(2+) is required as a cofactor. Requires Mn(2+) as cofactor.

The protein resides in the plastid. Its subcellular location is the chloroplast. The enzyme catalyses (2E)-geranyl diphosphate = alpha-pinene + diphosphate. It functions in the pathway secondary metabolite biosynthesis; terpenoid biosynthesis. Its function is as follows. Monoterpene synthase involved in the biosynthesis of volatile compounds. Mediates the conversion of (2E)-geranyl diphosphate (GPP) into alpha-pinene. This is Alpha pinene synthase, chloroplastic from Chamaecyparis formosensis (Formosan cypress).